The following is a 264-amino-acid chain: tRNA (guanine-N(1)-)-methyltransferase (264 aa).

S-adenosyl-L-methionine-binding positions include Gly-125 and 145 to 150 (LGDFVL).

It belongs to the RNA methyltransferase TrmD family. In terms of assembly, homodimer.

It localises to the cytoplasm. It carries out the reaction guanosine(37) in tRNA + S-adenosyl-L-methionine = N(1)-methylguanosine(37) in tRNA + S-adenosyl-L-homocysteine + H(+). Functionally, specifically methylates guanosine-37 in various tRNAs. This chain is tRNA (guanine-N(1)-)-methyltransferase, found in Burkholderia cenocepacia (strain HI2424).